The chain runs to 211 residues: Uridine kinase (211 aa).

Residue 12 to 19 coordinates ATP; that stretch reads GGSGGGKT.

The protein belongs to the uridine kinase family.

Its subcellular location is the cytoplasm. It catalyses the reaction uridine + ATP = UMP + ADP + H(+). The catalysed reaction is cytidine + ATP = CMP + ADP + H(+). The protein operates within pyrimidine metabolism; CTP biosynthesis via salvage pathway; CTP from cytidine: step 1/3. It participates in pyrimidine metabolism; UMP biosynthesis via salvage pathway; UMP from uridine: step 1/1. The protein is Uridine kinase of Streptococcus thermophilus (strain CNRZ 1066).